Reading from the N-terminus, the 142-residue chain is Lipoprotein MlpI (142 aa).

The first 17 residues, 1–17 (MKIINILFCLFLLMLNS), serve as a signal peptide directing secretion. Cys-18 carries N-palmitoyl cysteine lipidation. Residue Cys-18 is the site of S-diacylglycerol cysteine attachment. The segment at 22–54 (DTNTSQTKSRQKRDLTQKEATQEKPKSKEDLLR) is disordered. The segment covering 33 to 54 (KRDLTQKEATQEKPKSKEDLLR) has biased composition (basic and acidic residues).

Belongs to the Multicopy lipoprotein (Mlp) family.

The protein localises to the cell outer membrane. Its function is as follows. An outer membrane protein that may participate in pathogenesis. Some human Lyme disease patients have antibodies against this protein. The Mlp proteins probably undergo intragenic recombination, generating new alleles. This is Lipoprotein MlpI from Borreliella burgdorferi (strain ATCC 35210 / DSM 4680 / CIP 102532 / B31) (Borrelia burgdorferi).